The following is a 112-amino-acid chain: UPF0329 protein ECU11_0080 (112 aa).

The protein belongs to the UPF0329 family.

This chain is UPF0329 protein ECU11_0080, found in Encephalitozoon cuniculi (strain GB-M1) (Microsporidian parasite).